Consider the following 575-residue polypeptide: MSQDSKVKTTESTPPAPTKARKWLPVLDPSGDYYYWWLNTMVFPIMYNLIIVVCRACFPDLQHSYLVAWFVLDYTSDLLYLLDIGVRFHTGFLEQGILVVDKSMIASRYVRTWSFLLDLASLVPTDAAYVQLGPHIPTLRLNRFLRVPRLFEAFDRTETRTAYPNAFRIAKLMIYIFVVIHWNSCLYFALSRYLGFGRDAWVYPDPAQPGFERLRRQYLYSFYFSTLILTTVGDTPLPAREEEYLFMVGDFLLAVMGFATIMGSMSSVIYNMNTADAAFYPDHALVKKYMKLQHVNRRLERRVIDWYQHLQINKKMTNEVAILQHLPERLRAEVAVSVHLSTLSRVQIFQNCEASLLEELVLKLQPQTYSPGEYVCRKGDIGREMYIIREGQLAVVADDGVTQYAVLGAGLYFGEISIINIKGNMSGNRRTANIKSLGYSDLFCLSKEDLREVLSEYPQAQAVMEEKGREILLKMNKLDVNAEAAEIALQEATESRLKGLDQQLDDLQTKFARLLAELESSALKIAYRIERLEWQTREWPMPDDMGEADDEAEPGEGTSKDGEEKAGQEGPSGLE.

Residues 1 to 38 lie on the Cytoplasmic side of the membrane; the sequence is MSQDSKVKTTESTPPAPTKARKWLPVLDPSGDYYYWWL. Residues 39 to 60 traverse the membrane as a helical segment; sequence NTMVFPIMYNLIIVVCRACFPD. At 61–70 the chain is on the extracellular side; that stretch reads LQHSYLVAWF. Residues 71-91 traverse the membrane as a helical segment; the sequence is VLDYTSDLLYLLDIGVRFHTG. The Cytoplasmic segment spans residues 92 to 116; it reads FLEQGILVVDKSMIASRYVRTWSFL. A helical membrane pass occupies residues 117 to 135; that stretch reads LDLASLVPTDAAYVQLGPH. Topologically, residues 136-140 are extracellular; it reads IPTLR. Residues 141 to 159 traverse the membrane as a helical segment; that stretch reads LNRFLRVPRLFEAFDRTET. Residues 160 to 166 lie on the Cytoplasmic side of the membrane; the sequence is RTAYPNA. The ion conduction pathway stretch occupies residues 164–272; the sequence is PNAFRIAKLM…GSMSSVIYNM (109 aa). The helical transmembrane segment at 167–190 threads the bilayer; sequence FRIAKLMIYIFVVIHWNSCLYFAL. Topologically, residues 191-213 are extracellular; the sequence is SRYLGFGRDAWVYPDPAQPGFER. Helical transmembrane passes span 214 to 248 and 249 to 273; these read LRRQ…LFMV and GDFL…YNMN. The tract at residues 231–234 is selectivity filter; the sequence is TVGD. A C-linker region spans residues 274 to 350; the sequence is TADAAFYPDH…STLSRVQIFQ (77 aa). Over 274–575 the chain is Cytoplasmic; that stretch reads TADAAFYPDH…AGQEGPSGLE (302 aa). The IQ-type signature appears at 292–302; that stretch reads LQHVNRRLERR. A nucleoside 3',5'-cyclic phosphate is bound at residue 348-471; sequence IFQNCEASLL…AVMEEKGREI (124 aa). Positions 354–474 are cyclic nucleotide-binding domain; the sequence is ASLLEELVLK…EEKGREILLK (121 aa). G414, S417, R430, and T431 together coordinate 3',5'-cyclic GMP. 2 residues coordinate 3',5'-cyclic AMP: R430 and T431. The stretch at 493 to 547 forms a coiled coil; sequence TESRLKGLDQQLDDLQTKFARLLAELESSALKIAYRIERLEWQTREWPMPDDMGE. Positions 536 to 575 are disordered; sequence TREWPMPDDMGEADDEAEPGEGTSKDGEEKAGQEGPSGLE. Residues 544–554 are compositionally biased toward acidic residues; it reads DMGEADDEAEP. Positions 558-567 are enriched in basic and acidic residues; that stretch reads TSKDGEEKAG.

Belongs to the cyclic nucleotide-gated cation channel (TC 1.A.1.5) family. CNGA4 subfamily. In terms of assembly, the olfactory cyclic nucleotide-gated channel is an heterotetramer composed of CNGA2, CNGA4 and CNGB1b subunits with 2:1:1 stoichiometry. Expressed in the olfactory epithelium.

The protein resides in the cell projection. The protein localises to the cilium membrane. It catalyses the reaction Ca(2+)(in) = Ca(2+)(out). The enzyme catalyses Na(+)(in) = Na(+)(out). The catalysed reaction is K(+)(in) = K(+)(out). It carries out the reaction NH4(+)(in) = NH4(+)(out). It catalyses the reaction Rb(+)(in) = Rb(+)(out). The enzyme catalyses Li(+)(in) = Li(+)(out). The catalysed reaction is Cs(+)(in) = Cs(+)(out). Its activity is regulated as follows. Ca(2+)-calmodulin exerts its inhibitory effect in cAMP sensitivity by binding to IQ-like motif of CNGA4 and preferably binds to the channel in the closed state. Inhibition by PIP3 of the CNG channel probably occurs via CGNA2 binding. In terms of biological role, pore-forming subunit of the olfactory cyclic nucleotide-gated channel. Operates in the cilia of olfactory sensory neurons where chemical stimulation of the odorant is converted to an electrical signal. Mediates odorant-induced cAMP-dependent Ca(2+) influx triggering neuron depolarization. The rise of intracellular Ca(2+) levels potentiates the olfactory response by activating Ca(2+)-dependent Cl(-) channels, but it also serves as a negative feedback signal to desensitize the channel for rapid adaptation to odorants. Conducts cGMP- and cAMP-gated ion currents, with permeability for monovalent and divalent cations. Conducts cAMP- and cGMP-gated ion currents, with permeability for monovalent and divalent cations. May conduct nitric oxide-gated Ca(2+) currents relevant to neurons of vomeronasal organ, a system involved in the perception of pheromones. In Mus musculus (Mouse), this protein is Cyclic nucleotide-gated channel alpha-4.